A 1343-amino-acid polypeptide reads, in one-letter code: DNA-directed RNA polymerase subunit beta (1343 aa).

The protein belongs to the RNA polymerase beta chain family. The RNAP catalytic core consists of 2 alpha, 1 beta, 1 beta' and 1 omega subunit. When a sigma factor is associated with the core the holoenzyme is formed, which can initiate transcription.

It carries out the reaction RNA(n) + a ribonucleoside 5'-triphosphate = RNA(n+1) + diphosphate. Its function is as follows. DNA-dependent RNA polymerase catalyzes the transcription of DNA into RNA using the four ribonucleoside triphosphates as substrates. This is DNA-directed RNA polymerase subunit beta from Shewanella woodyi (strain ATCC 51908 / MS32).